The sequence spans 472 residues: tRNA-2-methylthio-N(6)-dimethylallyladenosine synthase (472 aa).

In terms of domain architecture, MTTase N-terminal spans 22–142 (RKVFVKTYGC…LPDALKRARA (121 aa)). Residues Cys-31, Cys-67, Cys-105, Cys-183, Cys-187, and Cys-190 each contribute to the [4Fe-4S] cluster site. The region spanning 169–403 (RARGVTAFLT…LLVKQQRGFA (235 aa)) is the Radical SAM core domain. The 63-residue stretch at 404 to 466 (EACVGREIDL…PNSLFAEMIG (63 aa)) folds into the TRAM domain.

It belongs to the methylthiotransferase family. MiaB subfamily. In terms of assembly, monomer. [4Fe-4S] cluster serves as cofactor.

It localises to the cytoplasm. The catalysed reaction is N(6)-dimethylallyladenosine(37) in tRNA + (sulfur carrier)-SH + AH2 + 2 S-adenosyl-L-methionine = 2-methylsulfanyl-N(6)-dimethylallyladenosine(37) in tRNA + (sulfur carrier)-H + 5'-deoxyadenosine + L-methionine + A + S-adenosyl-L-homocysteine + 2 H(+). In terms of biological role, catalyzes the methylthiolation of N6-(dimethylallyl)adenosine (i(6)A), leading to the formation of 2-methylthio-N6-(dimethylallyl)adenosine (ms(2)i(6)A) at position 37 in tRNAs that read codons beginning with uridine. This is tRNA-2-methylthio-N(6)-dimethylallyladenosine synthase from Rhizobium meliloti (strain 1021) (Ensifer meliloti).